The following is a 159-amino-acid chain: Protein-export protein SecB (159 aa).

It belongs to the SecB family. Homotetramer, a dimer of dimers. One homotetramer interacts with 1 SecA dimer.

The protein localises to the cytoplasm. One of the proteins required for the normal export of preproteins out of the cell cytoplasm. It is a molecular chaperone that binds to a subset of precursor proteins, maintaining them in a translocation-competent state. It also specifically binds to its receptor SecA. The chain is Protein-export protein SecB from Hahella chejuensis (strain KCTC 2396).